Here is a 95-residue protein sequence, read N- to C-terminus: MLHTLSVSPWHADIAAMLRVMDHGDDLLLLSDGVTAAIAGGRFLEILQSAPITLYVLQDDVDARGLAGQIADSVGRVSYTDFVRLTVKHAGQLAW.

Belongs to the DsrH/TusB family. As to quaternary structure, heterohexamer, formed by a dimer of trimers. The hexameric TusBCD complex contains 2 copies each of TusB, TusC and TusD. The TusBCD complex interacts with TusE.

The protein localises to the cytoplasm. Its function is as follows. Part of a sulfur-relay system required for 2-thiolation of 5-methylaminomethyl-2-thiouridine (mnm(5)s(2)U) at tRNA wobble positions. The sequence is that of Protein TusB from Klebsiella pneumoniae (strain 342).